Reading from the N-terminus, the 282-residue chain is MTKVFINGEFIDQNEAKVSYEDRGYVFGDGIYEYIRAYDGKLFTVTEHFERFIRSASEIQLDLGYTVEELIDVVRELLKVNNIQNGGIYIQATRGVAPRNHSFPTPEVKPVIMAFAKSYDRPYDDLENGINAATVEDIRWLRCDIKSLNLLGNVLAKEYAVKYNAGEAIQHRGETVTEGASSNVYAIKDGAIYTHPVNNYILNGITRKVIKWISEDEDIPFKEETFTVEFLKNADEVIVSSTSAEVTPVVKIDGEQVGDGKVGPVTRQLQEGFNKYIESRSS.

Tyr-32 serves as a coordination point for substrate. Arg-51 serves as a coordination point for pyridoxal 5'-phosphate. Positions 99 and 101 each coordinate substrate. Residue Lys-146 is the Proton acceptor of the active site. Lys-146 carries the N6-(pyridoxal phosphate)lysine modification. Position 178 (Glu-178) interacts with pyridoxal 5'-phosphate.

This sequence belongs to the class-IV pyridoxal-phosphate-dependent aminotransferase family. As to quaternary structure, homodimer. The cofactor is pyridoxal 5'-phosphate.

The catalysed reaction is D-alanine + 2-oxoglutarate = D-glutamate + pyruvate. In terms of biological role, acts on the D-isomers of alanine, leucine, aspartate, glutamate, aminobutyrate, norvaline and asparagine. The enzyme transfers an amino group from a substrate D-amino acid to the pyridoxal phosphate cofactor to form pyridoxamine and an alpha-keto acid in the first half-reaction. The second half-reaction is the reverse of the first, transferring the amino group from the pyridoxamine to a second alpha-keto acid to form the product D-amino acid via a ping-pong mechanism. This is an important process in the formation of D-alanine and D-glutamate, which are essential bacterial cell wall components. The protein is D-alanine aminotransferase (dat) of Staphylococcus haemolyticus.